The primary structure comprises 461 residues: UPF0053 protein YhdT (461 aa).

The 202-residue stretch at 1–202 (MDDIDSLILI…LKNGEINPSE (202 aa)) folds into the CNNM transmembrane domain. The next 3 helical transmembrane spans lie at 8–28 (ILIGVLIALTAFFVASEFAIV), 103–123 (VSFAVAYGLITFLHVVVGELA), and 137–157 (LLIAGPLRLFYLLLFPFIWIL). CBS domains are found at residues 221–280 (MIPR…MTEE) and 290–347 (YVRP…IRDE).

This sequence belongs to the UPF0053 family.

The protein localises to the cell membrane. The chain is UPF0053 protein YhdT (yhdT) from Bacillus subtilis (strain 168).